We begin with the raw amino-acid sequence, 1066 residues long: TBC1 domain family member 31 (1066 aa).

WD repeat units follow at residues 33–74 (HNTS…LHGN), 75–116 (RFNL…TVTK), 117–157 (ELVS…LDTF), 158–200 (QRKR…CDTL), 201–248 (FCKY…ARQL), 249–296 (FRII…MQTC), and 297–334 (KLLF…NIYS). In terms of domain architecture, Rab-GAP TBC spans 424-599 (EYPTKYRMFI…KLFDNIFSNH (176 aa)). Coiled coils occupy residues 728 to 861 (QKQE…DLEE) and 914 to 948 (NKCY…KWKE). Residues 989 to 998 (CHKEEPRFQN) show a composition bias toward basic and acidic residues. Residues 989-1020 (CHKEEPRFQNEQDSSCLPRTSQLNDSSEMDPS) are disordered. The segment covering 999 to 1020 (EQDSSCLPRTSQLNDSSEMDPS) has biased composition (polar residues). The mediates direct interaction with PJA2 stretch occupies residues 1053–1056 (RARH).

In terms of assembly, interacts with PJA2; the interaction is direct and recruits PJA2 to centrosomes. Interacts with OFD1; regulates its activity in cilium assembly. Interacts with PRKACA.

Its subcellular location is the cytoplasm. The protein resides in the cytoskeleton. It is found in the microtubule organizing center. It localises to the centrosome. The protein localises to the centriolar satellite. Its subcellular location is the cilium basal body. Molecular adapter which is involved in cilium biogenesis. Part of a functional complex including OFD1 a centriolar protein involved in cilium assembly. Could regulate the cAMP-dependent phosphorylation of OFD1, and its subsequent ubiquitination by PJA2 which ultimately leads to its proteasomal degradation. The protein is TBC1 domain family member 31 of Homo sapiens (Human).